The sequence spans 239 residues: Flagellin B3 (239 aa).

The propeptide occupies 1–11; sequence MLKNFMKNKKG. Asn115 and Asn128 each carry an N-linked (GlcNAc...) asparagine glycan.

Belongs to the archaeal flagellin family. Post-translationally, N-linked glycans consist of the 779 Da trisaccharide beta-ManNAc(Thr)-(1-4)-beta-GlcNAc3NAcA-(1-3)-beta-GlcNAc.

It is found in the archaeal flagellum. Flagellin is the subunit protein which polymerizes to form the filaments of archaeal flagella. This chain is Flagellin B3 (flaB3), found in Methanococcus voltae.